We begin with the raw amino-acid sequence, 365 residues long: Aminomethyltransferase (365 aa).

It belongs to the GcvT family. The glycine cleavage system is composed of four proteins: P, T, L and H.

The enzyme catalyses N(6)-[(R)-S(8)-aminomethyldihydrolipoyl]-L-lysyl-[protein] + (6S)-5,6,7,8-tetrahydrofolate = N(6)-[(R)-dihydrolipoyl]-L-lysyl-[protein] + (6R)-5,10-methylene-5,6,7,8-tetrahydrofolate + NH4(+). Functionally, the glycine cleavage system catalyzes the degradation of glycine. In Serratia proteamaculans (strain 568), this protein is Aminomethyltransferase.